Here is a 604-residue protein sequence, read N- to C-terminus: uncharacterized protein (604 aa).

The ABC transmembrane type-1 domain maps to 49–332 (LILVMLMVVI…LANQFNTMLS (284 aa)). The next 4 membrane-spanning stretches (helical) occupy residues 50–70 (ILVM…PFVI), 86–106 (LIPV…SLWF), 172–192 (VITF…LTLI), and 288–308 (IAAI…SIVV). The ABC transporter domain maps to 366-600 (IEFRDVSFGY…KGFYSDLYES (235 aa)). Residue 399–406 (GPTGAGKT) coordinates ATP. The helical transmembrane segment at 510 to 530 (LISIARAVLADPVLLILDEAT) threads the bilayer.

The protein belongs to the ABC transporter superfamily.

Its subcellular location is the cell membrane. This is an uncharacterized protein from Bacillus subtilis (strain 168).